A 1398-amino-acid polypeptide reads, in one-letter code: DNA-directed RNA polymerase subunit beta' (1398 aa).

Residues cysteine 70, cysteine 72, cysteine 85, and cysteine 88 each coordinate Zn(2+). The Mg(2+) site is built by aspartate 460, aspartate 462, and aspartate 464. Zn(2+) is bound by residues cysteine 814, cysteine 888, cysteine 895, and cysteine 898.

It belongs to the RNA polymerase beta' chain family. In terms of assembly, the RNAP catalytic core consists of 2 alpha, 1 beta, 1 beta' and 1 omega subunit. When a sigma factor is associated with the core the holoenzyme is formed, which can initiate transcription. It depends on Mg(2+) as a cofactor. Requires Zn(2+) as cofactor.

The catalysed reaction is RNA(n) + a ribonucleoside 5'-triphosphate = RNA(n+1) + diphosphate. In terms of biological role, DNA-dependent RNA polymerase catalyzes the transcription of DNA into RNA using the four ribonucleoside triphosphates as substrates. This chain is DNA-directed RNA polymerase subunit beta', found in Pseudomonas putida (Arthrobacter siderocapsulatus).